Reading from the N-terminus, the 345-residue chain is Anthranilate phosphoribosyltransferase (345 aa).

Residues Gly-79, 82 to 83 (GD), Thr-87, 89 to 92 (NVST), 106 to 114 (KHGNRAVSG), and Ser-118 contribute to the 5-phospho-alpha-D-ribose 1-diphosphate site. Gly-79 serves as a coordination point for anthranilate. Ser-91 is a binding site for Mg(2+). Asn-109 contributes to the anthranilate binding site. Arg-164 contacts anthranilate. The Mg(2+) site is built by Asp-223 and Glu-224.

It belongs to the anthranilate phosphoribosyltransferase family. Homodimer. It depends on Mg(2+) as a cofactor.

The enzyme catalyses N-(5-phospho-beta-D-ribosyl)anthranilate + diphosphate = 5-phospho-alpha-D-ribose 1-diphosphate + anthranilate. It functions in the pathway amino-acid biosynthesis; L-tryptophan biosynthesis; L-tryptophan from chorismate: step 2/5. Catalyzes the transfer of the phosphoribosyl group of 5-phosphorylribose-1-pyrophosphate (PRPP) to anthranilate to yield N-(5'-phosphoribosyl)-anthranilate (PRA). This Sulfurisphaera tokodaii (strain DSM 16993 / JCM 10545 / NBRC 100140 / 7) (Sulfolobus tokodaii) protein is Anthranilate phosphoribosyltransferase.